The chain runs to 243 residues: MTKLCLLLLPLVFLVSYSFAEEEITISISPNANPVQKPIGHQISLVCSIKKTDSNGEKPGMIWKKHGGLDRTGNVEVKKLDDYTLGLIIRNSSVEDSGVYYCQAQVGSKVYMNKMDVIVFEDIVFRDKQLHFGQVLATASVNISCEVSAKKDSVITYWTRHGKQILEGGKHKFYSRGSILEIQNYQPEQDAGQYTCEVFHVSSGSSNTKTVTLGTTGEKNYVACQQMCNSFCTDVHNKVFTNN.

The signal sequence occupies residues 1–20; sequence MTKLCLLLLPLVFLVSYSFA. Ig-like C2-type domains are found at residues 30–118 and 133–212; these read PNAN…MDVI and GQVL…KTVT. Cys47 and Cys102 are disulfide-bonded. Asn91 and Asn142 each carry an N-linked (GlcNAc...) asparagine glycan. Cys145 and Cys196 are disulfide-bonded.

In terms of tissue distribution, expressed in head and tail body wall muscles.

Its subcellular location is the secreted. In terms of biological role, probably not involved in maintaining the position of ASI and ASH head neuron cell bodies and ventral nerve cord axons of PVQ, PVP, RMEV, AVK and HSN neurons. The protein is Zwei Ig domain protein zig-6 of Caenorhabditis elegans.